Here is a 222-residue protein sequence, read N- to C-terminus: Vacuolar protein sorting-associated protein 2 homolog 2 (222 aa).

Coiled-coil stretches lie at residues 26-83 and 143-222; these read RGIE…AQIR and SEAI…LRRI. A disordered region spans residues 179–222; that stretch reads SSAPKGRIATKTAAPPASTAATNKNSESSEVDELEKRLASLRRI. Over residues 187 to 203 the composition is skewed to low complexity; it reads ATKTAAPPASTAATNKN.

Belongs to the SNF7 family. Component of the endosomal sorting required for transport complex III (ESCRT-III), composed at least of VPS2, VPS20, VPS24 and VPS32. Interacts with CHMP1A, CHMP1B and VPS60-1.

The protein resides in the endosome. Functionally, component of the ESCRT-III complex, which is required for multivesicular bodies (MVBs) formation and sorting of endosomal cargo proteins into MVBs. The ESCRT-III complex is probably involved in the concentration of MVB cargo. In Arabidopsis thaliana (Mouse-ear cress), this protein is Vacuolar protein sorting-associated protein 2 homolog 2 (VPS2.2).